Here is a 525-residue protein sequence, read N- to C-terminus: D-aminopeptidase (525 aa).

The active-site Nucleophile is the Ser62. Residue Lys65 is the Proton donor/acceptor of the active site. The important for specificity stretch occupies residues 485–495; the sequence is PRALDHTAPGD. Asp489 provides a ligand contact to substrate.

The protein belongs to the peptidase S12 family. Homodimer.

The enzyme catalyses Release of an N-terminal D-amino acid from a peptide, Xaa-|-Yaa-, in which Xaa is preferably D-Ala, D-Ser or D-Thr. D-amino acid amides and methyl esters also are hydrolyzed, as is glycine amide.. Inhibited by beta-lactam compounds such as 6-aminopenicillic acid, 7-aminocephalosporanic acid, benzylpenicillin and ampicillin. Inhibited by p-chloromercuribenzoate. Hydrolyzes N-terminal residues in D-amino acid-containing peptides. This Gluconobacter oxydans (strain 621H) (Gluconobacter suboxydans) protein is D-aminopeptidase.